Here is an 835-residue protein sequence, read N- to C-terminus: BCL11 transcription factor A (835 aa).

Residues 1–12 (MSRRKQGKPQHL) show a composition bias toward basic residues. Residues 1-41 (MSRRKQGKPQHLSKREFSPEPLEAILTDDEPDHGPLGAPEG) are disordered. Positions 1–210 (MSRRKQGKPQ…SEHGSPLTPR (210 aa)) are required for nuclear body formation and for SUMO1 recruitment. Residues 45–71 (LLTCGQCQMNFPLGDILIFIEHKRKQC) form a C2HC-type zinc finger. The Zn(2+) site is built by Cys48, Cys51, His66, and Cys71. The residue at position 86 (Ser86) is a Phosphoserine. A Glycyl lysine isopeptide (Lys-Gly) (interchain with G-Cter in SUMO2) cross-link involves residue Lys123. Ile162 carries the phosphothreonine modification. A Glycyl lysine isopeptide (Lys-Gly) (interchain with G-Cter in SUMO2) cross-link involves residue Lys164. A C2H2-type 1 zinc finger spans residues 170–193 (YTCTTCKQPFTSAWFLLQHAQNTH). Phosphoserine is present on Ser205. Pro214 is subject to Phosphothreonine. Arg271 bears the Asymmetric dimethylarginine mark. The disordered stretch occupies residues 323–376 (AGNTSSPPLSPGRPSPMQRLLQPFQPGSKPPFLATPPLPPLQSAPPPSQPPVKS). 2 positions are modified to phosphoserine: Ser332 and Ser337. Pro residues predominate over residues 355–372 (LATPPLPPLQSAPPPSQP). 2 C2H2-type zinc fingers span residues 377–399 (KSCE…RRSH) and 405–429 (YKCN…THMH). The segment covering 421–430 (KRHMKTHMHK) has biased composition (basic residues). Disordered regions lie at residues 421–458 (KRHM…LVGS), 471–512 (KSEN…ERVD), and 572–619 (RSHL…GLSK). Residues 441–450 (GLSTASSPEP) show a composition bias toward polar residues. Phosphoserine is present on residues Ser446 and Ser447. Acidic residues predominate over residues 482–506 (NGDEEEEEDDEEEEEEEEEEEEELT). Residues 574-584 (HLAEAEGHRDT) are compositionally biased toward basic and acidic residues. Ser608 bears the Phosphoserine mark. Lys620 is covalently cross-linked (Glycyl lysine isopeptide (Lys-Gly) (interchain with G-Cter in SUMO2)). A phosphoserine mark is found at Ser625 and Ser630. Residue Lys634 forms a Glycyl lysine isopeptide (Lys-Gly) (interchain with G-Cter in SUMO1) linkage. A compositionally biased stretch (low complexity) spans 682-696 (SPFASSSEHSSENGS). Thr701 bears the Phosphothreonine mark. Gly residues predominate over residues 706-720 (LDGGISGRSGTGSGG). The interval 737-835 (EGRRSDTCEY…RVLNNDIKTE (99 aa)) is DNA-binding. The segment at 742–764 (DTCEYCGKVFKNCSNLTVHRRSH) adopts a C2H2-type 4 zinc-finger fold. Cys744, Cys747, His760, and His764 together coordinate Zn(2+). Polar residues predominate over residues 764–773 (HTGERPYKCE). The tract at residues 765-769 (TGERP) is disordered. A C2H2-type 5 zinc finger spans residues 770-792 (YKCELCNYACAQSSKLTRHMKTH). Zn(2+)-binding residues include Cys772, Cys775, His788, and His792. Residues 793-799 (GQVGKDV) are disordered. The C2H2-type 6 zinc finger occupies 800 to 823 (YKCEICKMPFSVYSTLEKHMKKWH). Residues Cys802, Cys805, His818, and His823 each coordinate Zn(2+).

As to quaternary structure, homotetrameric; self-associates via C2HC-type zinc finger domain. Interacts with MTA2, a component of the nucleosome remodeling and deacetylase (NuRD) repressor complex. Interacts with NR2F1, PIAS3, NR2F2 and NR2F6. Interacts with TBR1. In terms of processing, sumoylated with SUMO1. In terms of tissue distribution, isoforms are expressed in a tissue-specific fashion. Isoforms 1, isoform 2, and isoform 3 are expressed at similar levels in testis, kidney and spleen. Isoform 1 is expressed in the stomach, and isoform 2 is expressed exclusively in the lung. Overexpression following proviral integration in hematopoietic cells results in the generation of myeloid leukemia.

Its subcellular location is the cytoplasm. The protein resides in the nucleus. Transcription factor. Associated with the BAF SWI/SNF chromatin remodeling complex. Binds to the 5'-TGACCA-3' sequence motif in regulatory regions of target genes. Involved in brain development. May play a role in hematopoiesis. Essential factor in lymphopoiesis, required for B-cell formation in fetal liver. May function as a modulator of the transcriptional repression activity of NR2F2. The protein is BCL11 transcription factor A (Bcl11a) of Mus musculus (Mouse).